A 108-amino-acid polypeptide reads, in one-letter code: UPF0060 membrane protein YnfA (108 aa).

At 1–5 the chain is on the periplasmic side; the sequence is MIKTT. The chain crosses the membrane as a helical span at residues 6-26; it reads LLFFATALCEIIGCFLPWLWL. The Cytoplasmic segment spans residues 27 to 30; sequence KRNA. Residues 31 to 51 traverse the membrane as a helical segment; that stretch reads SIWLLLPAGISLALFVWLLTL. Residues 52-60 lie on the Periplasmic side of the membrane; sequence HPAASGRVY. The helical transmembrane segment at 61–81 threads the bilayer; sequence AAYGGVYVCTALMWLRVVDGV. At 82 to 84 the chain is on the cytoplasmic side; that stretch reads KLS. A helical transmembrane segment spans residues 85–105; the sequence is LYDWTGALIALCGMLIIVAGW. Residues 106 to 108 are Periplasmic-facing; it reads GRT.

This sequence belongs to the UPF0060 family.

Its subcellular location is the cell inner membrane. In Shigella flexneri serotype 5b (strain 8401), this protein is UPF0060 membrane protein YnfA.